Consider the following 436-residue polypeptide: Ribosomal protein uS12 methylthiotransferase RimO (436 aa).

Positions 2-114 constitute an MTTase N-terminal domain; that stretch reads PNLYLVSLGC…IDEMILKKQN (113 aa). C11, C45, C77, C146, C150, and C153 together coordinate [4Fe-4S] cluster. The 232-residue stretch at 132 to 363 folds into the Radical SAM core domain; sequence TGSSYHAYIK…IKKQIEGSFK (232 aa). The TRAM domain occupies 363–434; sequence KSLVGEVIKV…KDKLIGEIIC (72 aa).

This sequence belongs to the methylthiotransferase family. RimO subfamily. Requires [4Fe-4S] cluster as cofactor.

The protein localises to the cytoplasm. The enzyme catalyses L-aspartate(89)-[ribosomal protein uS12]-hydrogen + (sulfur carrier)-SH + AH2 + 2 S-adenosyl-L-methionine = 3-methylsulfanyl-L-aspartate(89)-[ribosomal protein uS12]-hydrogen + (sulfur carrier)-H + 5'-deoxyadenosine + L-methionine + A + S-adenosyl-L-homocysteine + 2 H(+). Catalyzes the methylthiolation of an aspartic acid residue of ribosomal protein uS12. This chain is Ribosomal protein uS12 methylthiotransferase RimO, found in Campylobacter fetus subsp. fetus (strain 82-40).